The chain runs to 429 residues: Enolase (429 aa).

Residue glutamine 167 coordinates (2R)-2-phosphoglycerate. The active-site Proton donor is the glutamate 209. Aspartate 246, glutamate 289, and aspartate 316 together coordinate Mg(2+). Positions 341, 370, 371, and 392 each coordinate (2R)-2-phosphoglycerate. Lysine 341 acts as the Proton acceptor in catalysis.

Belongs to the enolase family. Component of the RNA degradosome, a multiprotein complex involved in RNA processing and mRNA degradation. It depends on Mg(2+) as a cofactor.

The protein resides in the cytoplasm. The protein localises to the secreted. It is found in the cell surface. The catalysed reaction is (2R)-2-phosphoglycerate = phosphoenolpyruvate + H2O. It functions in the pathway carbohydrate degradation; glycolysis; pyruvate from D-glyceraldehyde 3-phosphate: step 4/5. Its function is as follows. Catalyzes the reversible conversion of 2-phosphoglycerate (2-PG) into phosphoenolpyruvate (PEP). It is essential for the degradation of carbohydrates via glycolysis. The sequence is that of Enolase from Pseudomonas entomophila (strain L48).